The sequence spans 263 residues: Indolethylamine N-methyltransferase (263 aa).

An N6-succinyllysine modification is found at lysine 13. S-adenosyl-L-methionine is bound by residues tyrosine 20, tyrosine 25, glycine 63, tyrosine 69, 85-87 (DFT), and asparagine 90. N6-succinyllysine is present on lysine 96. S-adenosyl-L-methionine-binding positions include 142-143 (DV) and leucine 163.

It belongs to the class I-like SAM-binding methyltransferase superfamily. NNMT/PNMT/TEMT family. In terms of assembly, monomer. As to expression, widely expressed. The highest levels were in thyroid, adrenal gland, adult and fetal lung. Intermediate levels in heart, placenta, skeletal muscle, testis, small intestine, pancreas, stomach, spinal cord, lymph node and trachea. Very low levels in adult and fetal kidney and liver, in adult spleen, thymus, ovary, colon and bone marrow. Not expressed in peripheral blood leukocytes and brain.

It is found in the cytoplasm. It carries out the reaction a tertiary amine + S-adenosyl-L-methionine = a methylated tertiary amine + S-adenosyl-L-homocysteine + H(+). The catalysed reaction is a secondary amine + S-adenosyl-L-methionine = a methylated secondary amine + S-adenosyl-L-homocysteine + H(+). The enzyme catalyses a primary amine + S-adenosyl-L-methionine = a methylated primary amine + S-adenosyl-L-homocysteine + H(+). It catalyses the reaction dimethyl sulfide + S-adenosyl-L-methionine = trimethylsulfonium + S-adenosyl-L-homocysteine. In terms of biological role, functions as a thioether S-methyltransferase and is active with a variety of thioethers and the corresponding selenium and tellurium compounds, including 3-methylthiopropionaldehyde, dimethyl selenide, dimethyl telluride, 2-methylthioethylamine, 2-methylthioethanol, methyl-n-propyl sulfide and diethyl sulfide. Plays an important role in the detoxification of selenium compounds. Catalyzes the N-methylation of tryptamine and structurally related compounds. This is Indolethylamine N-methyltransferase (INMT) from Homo sapiens (Human).